Consider the following 28-residue polypeptide: ACGPGCSGSCRQKGDRIKCINGSCHCYP.

Intrachain disulfides connect C2-C19, C6-C24, and C10-C26. Residues 17–24 (IKCINGSC) form an interaction with Ca(2+)-activated K(+) channels region.

It belongs to the short scorpion toxin superfamily. Potassium channel inhibitor family. Alpha-KTx 13 subfamily. Expressed by the venom gland.

It is found in the secreted. Its function is as follows. Potent and selective inhibitor of Kv1.2/KCNA2 potassium channels. This is Potassium channel toxin alpha-KTx 13.2 from Orthochirus scrobiculosus (Central Asian scorpion).